A 467-amino-acid chain; its full sequence is ATP synthase subunit beta (467 aa).

Glycine 154 to threonine 161 contributes to the ATP binding site.

Belongs to the ATPase alpha/beta chains family. In terms of assembly, F-type ATPases have 2 components, CF(1) - the catalytic core - and CF(0) - the membrane proton channel. CF(1) has five subunits: alpha(3), beta(3), gamma(1), delta(1), epsilon(1). CF(0) has three main subunits: a(1), b(2) and c(9-12). The alpha and beta chains form an alternating ring which encloses part of the gamma chain. CF(1) is attached to CF(0) by a central stalk formed by the gamma and epsilon chains, while a peripheral stalk is formed by the delta and b chains.

Its subcellular location is the cell inner membrane. It catalyses the reaction ATP + H2O + 4 H(+)(in) = ADP + phosphate + 5 H(+)(out). Produces ATP from ADP in the presence of a proton gradient across the membrane. The catalytic sites are hosted primarily by the beta subunits. This chain is ATP synthase subunit beta, found in Leptospira borgpetersenii serovar Hardjo-bovis (strain JB197).